Here is a 152-residue protein sequence, read N- to C-terminus: 3-dehydroquinate dehydratase (152 aa).

The active-site Proton acceptor is Y26. Substrate is bound by residues N77, H83, and D90. The Proton donor role is filled by H103. Residues 104-105 (LS) and R114 each bind substrate.

Belongs to the type-II 3-dehydroquinase family. As to quaternary structure, homododecamer.

The catalysed reaction is 3-dehydroquinate = 3-dehydroshikimate + H2O. Its pathway is metabolic intermediate biosynthesis; chorismate biosynthesis; chorismate from D-erythrose 4-phosphate and phosphoenolpyruvate: step 3/7. Catalyzes a trans-dehydration via an enolate intermediate. The chain is 3-dehydroquinate dehydratase from Tolumonas auensis (strain DSM 9187 / NBRC 110442 / TA 4).